A 609-amino-acid chain; its full sequence is Rhotekin-2 (609 aa).

Residues 5–81 (SLRGPALRLA…LQKLEEQIAN (77 aa)) form the REM-1 domain. Positions 56 to 91 (KNLMVCNARLMAYTSELQKLEEQIANQTGRCDVKFE) form a coiled coil. The region spanning 286–393 (EDAFAGFLNQ…WMEAFWQHFF (108 aa)) is the PH domain. Disordered regions lie at residues 495–520 (HDEK…KSQS) and 554–609 (KPMA…QAQV). Over residues 569–582 (RLSDGEHTDTKTNF) the composition is skewed to basic and acidic residues.

Expressed in lymphocytes, CD4 positive T-cells and bone marrow-derived cells. Also expressed in lung, colon, thymus and brain.

In terms of biological role, may play an important role in lymphopoiesis. The protein is Rhotekin-2 (RTKN2) of Homo sapiens (Human).